Here is a 419-residue protein sequence, read N- to C-terminus: Acyl-coenzyme A thioesterase 1 (419 aa).

Active-site charge relay system residues include S232, D324, and H358. Residue S416 is modified to Phosphoserine.

The protein belongs to the C/M/P thioester hydrolase family. As to quaternary structure, monomer. As to expression, expressed in liver.

The protein localises to the cytoplasm. The protein resides in the cytosol. It carries out the reaction hexadecanoyl-CoA + H2O = hexadecanoate + CoA + H(+). The enzyme catalyses dodecanoyl-CoA + H2O = dodecanoate + CoA + H(+). The catalysed reaction is tetradecanoyl-CoA + H2O = tetradecanoate + CoA + H(+). It catalyses the reaction decanoyl-CoA + H2O = decanoate + CoA + H(+). It carries out the reaction octadecanoyl-CoA + H2O = octadecanoate + CoA + H(+). The enzyme catalyses eicosanoyl-CoA + H2O = eicosanoate + CoA + H(+). The catalysed reaction is (9Z)-octadecenoyl-CoA + H2O = (9Z)-octadecenoate + CoA + H(+). It catalyses the reaction (9Z)-hexadecenoyl-CoA + H2O = (9Z)-hexadecenoate + CoA + H(+). It carries out the reaction (9E)-octadecenoyl-CoA + H2O = (9E)-octadecenoate + CoA + H(+). It participates in lipid metabolism; fatty acid metabolism. Functionally, catalyzes the hydrolysis of acyl-CoAs into free fatty acids and coenzyme A (CoASH), regulating their respective intracellular levels. More active towards saturated and unsaturated long chain fatty acyl-CoAs (C12-C20). This Rattus norvegicus (Rat) protein is Acyl-coenzyme A thioesterase 1 (Acot1).